A 214-amino-acid chain; its full sequence is Endothelial cell-specific chemotaxis regulator (214 aa).

The N-terminal stretch at 1–18 is a signal peptide; it reads MRLGSAILGLLLLQGYSS. The Extracellular portion of the chain corresponds to 19 to 130; that stretch reads QPTTTQTSQE…PTPTSESVLT (112 aa). The segment at 23 to 107 is disordered; the sequence is TQTSQEILQK…DATPSPETTS (85 aa). The segment covering 28-57 has biased composition (polar residues); the sequence is EILQKSSQVSLVSNQPVTPRSSTMDKQSLS. Low complexity predominate over residues 80 to 90; that stretch reads RSSSSSSSSSS. A helical transmembrane segment spans residues 131 to 151; that stretch reads VAAFGVISFIVILVVVVIILV. Topologically, residues 152–214 are cytoplasmic; sequence SVVSLRFKCR…KGSMSAEKIL (63 aa). Residues 163-184 form a disordered region; the sequence is NKESEDPQKPGSSGLSESCSTA. A compositionally biased stretch (polar residues) spans 172–184; sequence PGSSGLSESCSTA. Ser204 and Ser207 each carry phosphoserine.

Belongs to the ECSCR family. Interacts with FLNA. Interacts with the 20S proteasome subunit PSMA7. In terms of processing, may be heavily O-glycosylated. Expressed in all tissues examined, highest expression was observed in lung and spleen endothelial cells.

Its subcellular location is the cell membrane. It localises to the cytoplasm. Its function is as follows. Regulates endothelial chemotaxis and tube formation. Has a role in angiogenesis and apoptosis via modulation of the actin cytoskeleton and facilitation of proteasomal degradation of the apoptosis inhibitors BIRC3/IAP1 and BIRC2/IAP2. The chain is Endothelial cell-specific chemotaxis regulator (Ecscr) from Mus musculus (Mouse).